We begin with the raw amino-acid sequence, 1524 residues long: DNA-directed RNA polymerase subunit beta' (1524 aa).

Residues Cys-58, Cys-60, Cys-73, and Cys-76 each contribute to the Zn(2+) site. Mg(2+) contacts are provided by Asp-739, Asp-741, and Asp-743. Cys-1112, Cys-1194, Cys-1201, and Cys-1204 together coordinate Zn(2+). Residues 1502-1524 (AVEAKEKEAPRRPVRREQPGKGL) form a disordered region.

Belongs to the RNA polymerase beta' chain family. In terms of assembly, the RNAP catalytic core consists of 2 alpha, 1 beta, 1 beta' and 1 omega subunit. When a sigma factor is associated with the core the holoenzyme is formed, which can initiate transcription. Mg(2+) is required as a cofactor. It depends on Zn(2+) as a cofactor.

The enzyme catalyses RNA(n) + a ribonucleoside 5'-triphosphate = RNA(n+1) + diphosphate. Its function is as follows. DNA-dependent RNA polymerase catalyzes the transcription of DNA into RNA using the four ribonucleoside triphosphates as substrates. The chain is DNA-directed RNA polymerase subunit beta' from Thermus aquaticus.